A 366-amino-acid chain; its full sequence is MTISLENTTVGQNPAGGPPTGKAPLDMEGLAWILFGASAFQYLNAACELNLFELLENKPGLTKPQIGAELGLADRANDILLLGATATGMLTVEDGRYQLATVLAELLKTDDWQRFKDTVGFEQYVCYEGQIDFTESLRSNSNVGLRRVRGSGRDLYHRLHENPQMEQAFYKYMRSWSELANQHLVEVLDLSGTSKLLDCGGGDAVNSIALAQANPHIEAGILEIPPTAPLTEKKIAEAGLSDRITVKPGDMHTDEFPTGYDTVMFAHQLVIWTPEENTALLRKAYNALPEGGRVIIFNSMSNDEGDGPVVAALDSVYFAALPAEGGMIYSWATYEESLTKAGFNPETFQRIDFPGWTPHGVIIATK.

Residues 1–12 are compositionally biased toward polar residues; that stretch reads MTISLENTTVGQ. Residues 1 to 22 form a disordered region; the sequence is MTISLENTTVGQNPAGGPPTGK. Residue E223 coordinates S-adenosyl-L-methionine.

This sequence belongs to the class I-like SAM-binding methyltransferase superfamily. Cation-independent O-methyltransferase family.

The enzyme catalyses L-tyrosine + S-adenosyl-L-methionine = 3-methyl-L-tyrosine + S-adenosyl-L-homocysteine + H(+). Its pathway is antibiotic biosynthesis. In terms of biological role, C-methyltransferase that mediates the methylation of tyrosine into 3-methyl-L-tyrosine (3-Me-Tyr) in biosynthesis of saframycin A, a potent antitumor antibiotic that belongs to the tetrahydroisoquinoline family. Involved in biosynthesis of 3-hydroxy-5-methyl-O-methyltyrosine (3-OH-5-Me-OMe-Tyr), a core structure of saframycin A. The protein is L-tyrosine C(3)-methyltransferase of Streptomyces lavendulae.